Here is a 281-residue protein sequence, read N- to C-terminus: Undecaprenyl-diphosphatase (281 aa).

The next 7 helical transmembrane spans lie at 49–69 (SANTFKIVIQLGSIFAAAWIF), 92–112 (LHIFIGLIPAGIMGLLFDDFI), 116–136 (LFSVPTVLIGLALGALLMIAA), 152–172 (MTYKQALIIGVAQCLALWPGF), 196–216 (TFIMAVPIMFAASAKSLASNI), 224–244 (ILFYIVGFIAAFIFGVLSIRL), and 257–277 (FAIYRLILVAVIAVLYFGFGI).

It belongs to the UppP family.

It localises to the cell membrane. The enzyme catalyses di-trans,octa-cis-undecaprenyl diphosphate + H2O = di-trans,octa-cis-undecaprenyl phosphate + phosphate + H(+). Catalyzes the dephosphorylation of undecaprenyl diphosphate (UPP). Confers resistance to bacitracin. The polypeptide is Undecaprenyl-diphosphatase (Macrococcus caseolyticus (strain JCSC5402) (Macrococcoides caseolyticum)).